Reading from the N-terminus, the 380-residue chain is Cytochrome b (380 aa).

Transmembrane regions (helical) follow at residues 34–54 (FGSL…LLAA), 78–99 (WLIR…YLHI), 114–134 (WNTG…GYVL), and 179–199 (FFTL…IHLT). Positions 84 and 98 each coordinate heme b. His-183 and His-197 together coordinate heme b. His-202 is a binding site for a ubiquinone. 4 helical membrane passes run 227-247 (TKDI…ALFS), 289-309 (LGGV…PLLH), 321-341 (LSQL…WIGS), and 348-368 (FIII…ILFP).

The protein belongs to the cytochrome b family. In terms of assembly, the cytochrome bc1 complex contains 11 subunits: 3 respiratory subunits (MT-CYB, CYC1 and UQCRFS1), 2 core proteins (UQCRC1 and UQCRC2) and 6 low-molecular weight proteins (UQCRH/QCR6, UQCRB/QCR7, UQCRQ/QCR8, UQCR10/QCR9, UQCR11/QCR10 and a cleavage product of UQCRFS1). This cytochrome bc1 complex then forms a dimer. The cofactor is heme b.

It is found in the mitochondrion inner membrane. Component of the ubiquinol-cytochrome c reductase complex (complex III or cytochrome b-c1 complex) that is part of the mitochondrial respiratory chain. The b-c1 complex mediates electron transfer from ubiquinol to cytochrome c. Contributes to the generation of a proton gradient across the mitochondrial membrane that is then used for ATP synthesis. This chain is Cytochrome b (MT-CYB), found in Eudyptes chrysolophus (Macaroni penguin).